Reading from the N-terminus, the 432-residue chain is Competence protein ComFA (432 aa).

4 residues coordinate Zn(2+): cysteine 40, cysteine 43, cysteine 60, and cysteine 63. The Helicase ATP-binding domain maps to leucine 107 to leucine 257. Position 120–127 (alanine 120–threonine 127) interacts with ATP. The DEAD box motif lies at aspartate 205–aspartate 208. In terms of domain architecture, Helicase C-terminal spans lysine 289–leucine 432.

The protein belongs to the DEAD box helicase family. In terms of assembly, monomer and dimer in solution. Interacts with DprA and ComFC; ComFA-ComFC form rings about 150 Angstroms in diameter with apparent 6-fold symmetry. The cofactor is Zn(2+).

It is found in the cytoplasm. Functionally, involved in transformation (genetic competence for DNA uptake). DNA uptake is energy dependent, this protein may provide the driving force for DNA uptake. Does not have helicase activity, translocates on single-stranded (ss)DNA in a 5'-3' direction in an ATP-dependent manner, but does not unwind double-stranded (ds)DNA (tested with 5'- and 3'-overhang dsDNA). ATP hydrolysis causes the release of ssDNA from ComFA. A ssDNA-stimulated ATPase; dsDNA does not stimulate ATPase. ATP hydrolysis causes the release of ssDNA from ComFA. ComFC has no effect on ATPase activity. Binds ssDNA but only very poorly to dsDNA in the absence of ATP. Binding to ssDNA does not require free DNA ends. This is Competence protein ComFA from Streptococcus pneumoniae (strain ATCC BAA-255 / R6).